A 238-amino-acid chain; its full sequence is Sugar fermentation stimulation protein homolog (238 aa).

The protein belongs to the SfsA family.

The chain is Sugar fermentation stimulation protein homolog from Brucella abortus (strain S19).